We begin with the raw amino-acid sequence, 183 residues long: NAD(P)H-quinone oxidoreductase subunit I, chloroplastic (183 aa).

4Fe-4S ferredoxin-type domains are found at residues 55–84 (GRIH…VDWE) and 95–124 (KNYS…MTEE). [4Fe-4S] cluster contacts are provided by C64, C67, C70, C74, C104, C107, C110, and C114.

Belongs to the complex I 23 kDa subunit family. As to quaternary structure, NDH is composed of at least 16 different subunits, 5 of which are encoded in the nucleus. [4Fe-4S] cluster is required as a cofactor.

Its subcellular location is the plastid. It localises to the chloroplast thylakoid membrane. The catalysed reaction is a plastoquinone + NADH + (n+1) H(+)(in) = a plastoquinol + NAD(+) + n H(+)(out). It carries out the reaction a plastoquinone + NADPH + (n+1) H(+)(in) = a plastoquinol + NADP(+) + n H(+)(out). NDH shuttles electrons from NAD(P)H:plastoquinone, via FMN and iron-sulfur (Fe-S) centers, to quinones in the photosynthetic chain and possibly in a chloroplast respiratory chain. The immediate electron acceptor for the enzyme in this species is believed to be plastoquinone. Couples the redox reaction to proton translocation, and thus conserves the redox energy in a proton gradient. This Marchantia polymorpha (Common liverwort) protein is NAD(P)H-quinone oxidoreductase subunit I, chloroplastic.